A 241-amino-acid chain; its full sequence is Proteasome subunit alpha (241 aa).

This sequence belongs to the peptidase T1A family. The 20S proteasome core is composed of 14 alpha and 14 beta subunits that assemble into four stacked heptameric rings, resulting in a barrel-shaped structure. The two inner rings, each composed of seven catalytic beta subunits, are sandwiched by two outer rings, each composed of seven alpha subunits. The catalytic chamber with the active sites is on the inside of the barrel. Has a gated structure, the ends of the cylinder being occluded by the N-termini of the alpha-subunits. Is capped at one or both ends by the proteasome regulatory ATPase, PAN.

It localises to the cytoplasm. With respect to regulation, the formation of the proteasomal ATPase PAN-20S proteasome complex, via the docking of the C-termini of PAN into the intersubunit pockets in the alpha-rings, triggers opening of the gate for substrate entry. Interconversion between the open-gate and close-gate conformations leads to a dynamic regulation of the 20S proteasome proteolysis activity. In terms of biological role, component of the proteasome core, a large protease complex with broad specificity involved in protein degradation. This chain is Proteasome subunit alpha, found in Methanosphaerula palustris (strain ATCC BAA-1556 / DSM 19958 / E1-9c).